A 386-amino-acid polypeptide reads, in one-letter code: Succinate--CoA ligase [ADP-forming] subunit beta (386 aa).

Residues 9–244 (KEILRSYGVS…LDEEDPKEVE (236 aa)) form the ATP-grasp domain. Residues Lys46, 53–55 (GRG), Glu99, Cys102, and Glu107 contribute to the ATP site. Mg(2+) is bound by residues Asn199 and Asp213. Residues Asn264 and 321–323 (GIM) each bind substrate.

Belongs to the succinate/malate CoA ligase beta subunit family. In terms of assembly, heterotetramer of two alpha and two beta subunits. The cofactor is Mg(2+).

The enzyme catalyses succinate + ATP + CoA = succinyl-CoA + ADP + phosphate. It catalyses the reaction GTP + succinate + CoA = succinyl-CoA + GDP + phosphate. Its pathway is carbohydrate metabolism; tricarboxylic acid cycle; succinate from succinyl-CoA (ligase route): step 1/1. Functionally, succinyl-CoA synthetase functions in the citric acid cycle (TCA), coupling the hydrolysis of succinyl-CoA to the synthesis of either ATP or GTP and thus represents the only step of substrate-level phosphorylation in the TCA. The beta subunit provides nucleotide specificity of the enzyme and binds the substrate succinate, while the binding sites for coenzyme A and phosphate are found in the alpha subunit. The protein is Succinate--CoA ligase [ADP-forming] subunit beta of Geobacillus kaustophilus (strain HTA426).